Reading from the N-terminus, the 196-residue chain is Ribosomal RNA large subunit methyltransferase E (196 aa).

The S-adenosyl-L-methionine site is built by Gly50, Trp52, Asp70, Asp87, and Asp112. Lys152 (proton acceptor) is an active-site residue.

Belongs to the class I-like SAM-binding methyltransferase superfamily. RNA methyltransferase RlmE family.

It is found in the cytoplasm. The enzyme catalyses uridine(2552) in 23S rRNA + S-adenosyl-L-methionine = 2'-O-methyluridine(2552) in 23S rRNA + S-adenosyl-L-homocysteine + H(+). Functionally, specifically methylates the uridine in position 2552 of 23S rRNA at the 2'-O position of the ribose in the fully assembled 50S ribosomal subunit. The polypeptide is Ribosomal RNA large subunit methyltransferase E (Bdellovibrio bacteriovorus (strain ATCC 15356 / DSM 50701 / NCIMB 9529 / HD100)).